The following is a 285-amino-acid chain: ATP synthase gamma chain (285 aa).

It belongs to the ATPase gamma chain family. As to quaternary structure, F-type ATPases have 2 components, CF(1) - the catalytic core - and CF(0) - the membrane proton channel. CF(1) has five subunits: alpha(3), beta(3), gamma(1), delta(1), epsilon(1). CF(0) has three main subunits: a, b and c.

The protein resides in the cell membrane. In terms of biological role, produces ATP from ADP in the presence of a proton gradient across the membrane. The gamma chain is believed to be important in regulating ATPase activity and the flow of protons through the CF(0) complex. The sequence is that of ATP synthase gamma chain from Exiguobacterium sp. (strain ATCC BAA-1283 / AT1b).